The chain runs to 378 residues: ATP phosphoribosyltransferase regulatory subunit (378 aa).

It belongs to the class-II aminoacyl-tRNA synthetase family. HisZ subfamily. In terms of assembly, heteromultimer composed of HisG and HisZ subunits.

It localises to the cytoplasm. Its pathway is amino-acid biosynthesis; L-histidine biosynthesis; L-histidine from 5-phospho-alpha-D-ribose 1-diphosphate: step 1/9. Functionally, required for the first step of histidine biosynthesis. May allow the feedback regulation of ATP phosphoribosyltransferase activity by histidine. The polypeptide is ATP phosphoribosyltransferase regulatory subunit (Brucella abortus (strain 2308)).